The chain runs to 408 residues: Imidazolonepropionase (408 aa).

Fe(3+) contacts are provided by His73 and His75. Zn(2+) is bound by residues His73 and His75. 4-imidazolone-5-propanoate is bound by residues Arg82, Tyr145, and His178. Tyr145 contacts N-formimidoyl-L-glutamate. Position 243 (His243) interacts with Fe(3+). His243 serves as a coordination point for Zn(2+). Gln246 serves as a coordination point for 4-imidazolone-5-propanoate. Asp318 lines the Fe(3+) pocket. Asp318 contacts Zn(2+). Residues Asn320 and Gly322 each coordinate N-formimidoyl-L-glutamate. Ser323 serves as a coordination point for 4-imidazolone-5-propanoate.

It belongs to the metallo-dependent hydrolases superfamily. HutI family. Zn(2+) serves as cofactor. Requires Fe(3+) as cofactor.

The protein resides in the cytoplasm. The enzyme catalyses 4-imidazolone-5-propanoate + H2O = N-formimidoyl-L-glutamate. It participates in amino-acid degradation; L-histidine degradation into L-glutamate; N-formimidoyl-L-glutamate from L-histidine: step 3/3. Its function is as follows. Catalyzes the hydrolytic cleavage of the carbon-nitrogen bond in imidazolone-5-propanoate to yield N-formimidoyl-L-glutamate. It is the third step in the universal histidine degradation pathway. The chain is Imidazolonepropionase from Shewanella sediminis (strain HAW-EB3).